A 331-amino-acid chain; its full sequence is Aromatic 2-oxoacid reductase (331 aa).

NAD(+) contacts are provided by residues 154–155, D175, 205–206, N211, 232–234, and D258; these read RI, AP, and AAR. Residue R234 is part of the active site. The active site involves E263. Catalysis depends on H295, which acts as the Proton donor.

Belongs to the D-isomer specific 2-hydroxyacid dehydrogenase family.

The enzyme catalyses (R)-3-phenyllactate + NAD(+) = 3-phenylpyruvate + NADH + H(+). It carries out the reaction (2R)-2-hydroxy-3-(4-hydroxyphenyl)propanoate + NAD(+) = 3-(4-hydroxyphenyl)pyruvate + NADH + H(+). The catalysed reaction is 3-(indol-3-yl)lactate + NAD(+) = indole-3-pyruvate + NADH + H(+). It participates in amino-acid degradation. In terms of biological role, essential for the reductive metabolism of L-phenylalanine, L-tyrosine and L-tryptophan. Catalyzes the conversion of phenylpyruvic acid to phenyllactic acid, 4-hydroxy-phenylpyruvic acid to 4-hydroxy-phenyllactic acid, and indolepyruvic acid to indolelactic acid. This Clostridium sporogenes (strain ATCC 15579) protein is Aromatic 2-oxoacid reductase.